The chain runs to 727 residues: 1,4-alpha-glucan branching enzyme GlgB (727 aa).

D405 functions as the Nucleophile in the catalytic mechanism. E458 (proton donor) is an active-site residue.

Belongs to the glycosyl hydrolase 13 family. GlgB subfamily. As to quaternary structure, monomer.

It catalyses the reaction Transfers a segment of a (1-&gt;4)-alpha-D-glucan chain to a primary hydroxy group in a similar glucan chain.. It participates in glycan biosynthesis; glycogen biosynthesis. Functionally, catalyzes the formation of the alpha-1,6-glucosidic linkages in glycogen by scission of a 1,4-alpha-linked oligosaccharide from growing alpha-1,4-glucan chains and the subsequent attachment of the oligosaccharide to the alpha-1,6 position. In Yersinia pseudotuberculosis serotype I (strain IP32953), this protein is 1,4-alpha-glucan branching enzyme GlgB.